The following is a 99-amino-acid chain: Large ribosomal subunit protein eL21 (99 aa).

Belongs to the eukaryotic ribosomal protein eL21 family.

The protein is Large ribosomal subunit protein eL21 of Methanocella arvoryzae (strain DSM 22066 / NBRC 105507 / MRE50).